Consider the following 263-residue polypeptide: 3-methyl-2-oxobutanoate hydroxymethyltransferase (263 aa).

2 residues coordinate Mg(2+): Asp45 and Asp84. Residues 45-46 (DS), Asp84, and Lys112 contribute to the 3-methyl-2-oxobutanoate site. Glu114 lines the Mg(2+) pocket. Residue Glu181 is the Proton acceptor of the active site.

The protein belongs to the PanB family. Homodecamer; pentamer of dimers. Mg(2+) serves as cofactor.

Its subcellular location is the cytoplasm. It catalyses the reaction 3-methyl-2-oxobutanoate + (6R)-5,10-methylene-5,6,7,8-tetrahydrofolate + H2O = 2-dehydropantoate + (6S)-5,6,7,8-tetrahydrofolate. It participates in cofactor biosynthesis; (R)-pantothenate biosynthesis; (R)-pantoate from 3-methyl-2-oxobutanoate: step 1/2. Catalyzes the reversible reaction in which hydroxymethyl group from 5,10-methylenetetrahydrofolate is transferred onto alpha-ketoisovalerate to form ketopantoate. This Buchnera aphidicola subsp. Acyrthosiphon pisum (strain 5A) protein is 3-methyl-2-oxobutanoate hydroxymethyltransferase.